The primary structure comprises 127 residues: Protein translocase subunit SecE (127 aa).

The Cytoplasmic segment spans residues 1–19; it reads MSANTEAQGSGRGLEAMKW. The helical transmembrane segment at 20–32 threads the bilayer; it reads VVVVALLLVAIVG. Residues 33–48 are Periplasmic-facing; it reads NYLYRDIMLPLRALAV. Residues 49–60 traverse the membrane as a helical segment; it reads VILIAAAGGVAL. Residues 61-97 lie on the Cytoplasmic side of the membrane; sequence LTTKGKATVAFAREARTEVRKVIWPTRQETLHTTLIV. Residues 98–115 form a helical membrane-spanning segment; the sequence is AAVTAVMSLILWGLDGIL. Topologically, residues 116-127 are periplasmic; sequence VRLVSFITGLRF.

It belongs to the SecE/SEC61-gamma family. In terms of assembly, component of the Sec protein translocase complex. Heterotrimer consisting of SecY, SecE and SecG subunits. The heterotrimers can form oligomers, although 1 heterotrimer is thought to be able to translocate proteins. Interacts with the ribosome. Interacts with SecDF, and other proteins may be involved. Interacts with SecA.

The protein localises to the cell inner membrane. In terms of biological role, essential subunit of the Sec protein translocation channel SecYEG. Clamps together the 2 halves of SecY. May contact the channel plug during translocation. This Escherichia coli O157:H7 protein is Protein translocase subunit SecE.